Reading from the N-terminus, the 205-residue chain is SREBP regulating gene protein (205 aa).

At 1–16 (MVNLAAMVWRRLLRKR) the chain is on the cytoplasmic side. Residues 17–35 (WVLALVFGLSLVYFLTSTF) traverse the membrane as a helical segment. Residues 36 to 205 (KQEERAVRDR…GESPPELFPA (170 aa)) are Lumenal-facing. N67 carries an N-linked (GlcNAc...) asparagine glycan.

It belongs to the SPRING family. In terms of assembly, interacts with SCAP.

The protein localises to the golgi apparatus membrane. Its function is as follows. Positively regulates hepatic SREBP signaling pathway by modulating the proper localization of SCAP (SREBP cleavage-activating protein) to the endoplasmic reticulum, thereby controlling the level of functional SCAP. The sequence is that of SREBP regulating gene protein from Bos taurus (Bovine).